The primary structure comprises 112 residues: Diuretic hormone class 2 (112 aa).

The first 24 residues, 1–24 (MVRATCLLASCVLFALLLIVPASA), serve as a signal peptide directing secretion. The propeptide occupies 25-71 (YPRYPSNYFREEGQYEPEEIMDMLNRLGNLIQMERKMENYKEDITSE). Residue Pro-104 is modified to Proline amide. Residues 108–112 (RRDAH) constitute a propeptide that is removed on maturation.

In terms of tissue distribution, expressed in corpora cardiaca (CC), corpora allata (CA), antennal lobe (AL) and gnathal ganglion (GNG) (at protein level). Expression in CC, CA and AL detected in most animals, expression in GNG in few animals (at protein level).

The protein resides in the secreted. Its function is as follows. Regulation of fluid secretion. Stimulates Malpighian tubule fluid secretion. This Agrotis ipsilon (Black cutworm moth) protein is Diuretic hormone class 2.